A 283-amino-acid polypeptide reads, in one-letter code: ATP synthase gamma chain (283 aa).

It belongs to the ATPase gamma chain family. As to quaternary structure, F-type ATPases have 2 components, CF(1) - the catalytic core - and CF(0) - the membrane proton channel. CF(1) has five subunits: alpha(3), beta(3), gamma(1), delta(1), epsilon(1). CF(0) has three main subunits: a, b and c.

Its subcellular location is the cell membrane. Functionally, produces ATP from ADP in the presence of a proton gradient across the membrane. The gamma chain is believed to be important in regulating ATPase activity and the flow of protons through the CF(0) complex. This chain is ATP synthase gamma chain, found in Clostridium beijerinckii (strain ATCC 51743 / NCIMB 8052) (Clostridium acetobutylicum).